Here is a 311-residue protein sequence, read N- to C-terminus: HPr kinase/phosphorylase (311 aa).

Residues His-138 and Lys-159 contribute to the active site. 153–160 (GDSGIGKS) is a binding site for ATP. Ser-160 contacts Mg(2+). Residue Asp-177 is the Proton acceptor; for phosphorylation activity. Proton donor; for dephosphorylation activity of the active site. The segment at 201–210 (LEIRGVGIID) is important for the catalytic mechanism of both phosphorylation and dephosphorylation. Residue Glu-202 coordinates Mg(2+). Residue Arg-243 is part of the active site. An important for the catalytic mechanism of dephosphorylation region spans residues 264–269 (PVKTGR).

The protein belongs to the HPrK/P family. In terms of assembly, homohexamer. Mg(2+) is required as a cofactor.

It catalyses the reaction [HPr protein]-L-serine + ATP = [HPr protein]-O-phospho-L-serine + ADP + H(+). It carries out the reaction [HPr protein]-O-phospho-L-serine + phosphate + H(+) = [HPr protein]-L-serine + diphosphate. In terms of biological role, catalyzes the ATP- as well as the pyrophosphate-dependent phosphorylation of a specific serine residue in HPr, a phosphocarrier protein of the phosphoenolpyruvate-dependent sugar phosphotransferase system (PTS). HprK/P also catalyzes the pyrophosphate-producing, inorganic phosphate-dependent dephosphorylation (phosphorolysis) of seryl-phosphorylated HPr (P-Ser-HPr). The two antagonistic activities of HprK/P are regulated by several intracellular metabolites, which change their concentration in response to the absence or presence of rapidly metabolisable carbon sources (glucose, fructose, etc.) in the growth medium. Therefore, by controlling the phosphorylation state of HPr, HPrK/P is a sensor enzyme that plays a major role in the regulation of carbon metabolism and sugar transport: it mediates carbon catabolite repression (CCR), and regulates PTS-catalyzed carbohydrate uptake and inducer exclusion. This Streptococcus agalactiae serotype Ia (strain ATCC 27591 / A909 / CDC SS700) protein is HPr kinase/phosphorylase.